The primary structure comprises 429 residues: MKKQNNLRSLAAQAVELVVEQGQSLSNVLPPLQQKVADKDKALLQELCFGVLRTLSQLEWLINKLMSRPMTGKQRTVHYLIMVGFYQLLYTRVPPHAALAETVEGAVAIKRPQLKGLINGVLRQFQRQQETLLNEFATSDARFLHPGWLVKRLQNAYPTQWQHIIEANNQRPPMWLRVNRTHHTRDGWLGLLEDAGMKGYPHPDYPDAVRLETPAPVHALPGFAEGWVTVQDASAQGCAVFLAPQNGEHILDLCAAPGGKTTHILEVAPEADVLAVDIDEQRLSRVYDNLKRLGMKATVKQGDGRYPAQWCGEQQFDRILLDAPCSATGVIRRHPDIKWLRRDRDIAELAQLQAEILDAVWPRLKPGGTLVYATCSVLPEENRDQIKTFLQRTPDAALSETGTPDQPGQQNLPGGEEGDGFFYAKLIKK.

Residues 254–260, aspartate 277, aspartate 303, and aspartate 322 each bind S-adenosyl-L-methionine; that span reads CAAPGGK. Cysteine 375 acts as the Nucleophile in catalysis. The segment at 397-419 is disordered; sequence ALSETGTPDQPGQQNLPGGEEGD. Residues 400-412 are compositionally biased toward polar residues; that stretch reads ETGTPDQPGQQNL.

The protein belongs to the class I-like SAM-binding methyltransferase superfamily. RsmB/NOP family.

The protein localises to the cytoplasm. It carries out the reaction cytidine(967) in 16S rRNA + S-adenosyl-L-methionine = 5-methylcytidine(967) in 16S rRNA + S-adenosyl-L-homocysteine + H(+). Its function is as follows. Specifically methylates the cytosine at position 967 (m5C967) of 16S rRNA. This Salmonella enteritidis PT4 (strain P125109) protein is Ribosomal RNA small subunit methyltransferase B.